Consider the following 530-residue polypeptide: Bifunctional purine biosynthesis protein PurH (530 aa).

An MGS-like domain is found at 1-148 (MEQARPIRRA…KNHKDVAIVV (148 aa)).

The protein belongs to the PurH family.

It carries out the reaction (6R)-10-formyltetrahydrofolate + 5-amino-1-(5-phospho-beta-D-ribosyl)imidazole-4-carboxamide = 5-formamido-1-(5-phospho-D-ribosyl)imidazole-4-carboxamide + (6S)-5,6,7,8-tetrahydrofolate. The enzyme catalyses IMP + H2O = 5-formamido-1-(5-phospho-D-ribosyl)imidazole-4-carboxamide. Its pathway is purine metabolism; IMP biosynthesis via de novo pathway; 5-formamido-1-(5-phospho-D-ribosyl)imidazole-4-carboxamide from 5-amino-1-(5-phospho-D-ribosyl)imidazole-4-carboxamide (10-formyl THF route): step 1/1. The protein operates within purine metabolism; IMP biosynthesis via de novo pathway; IMP from 5-formamido-1-(5-phospho-D-ribosyl)imidazole-4-carboxamide: step 1/1. In Aeromonas hydrophila subsp. hydrophila (strain ATCC 7966 / DSM 30187 / BCRC 13018 / CCUG 14551 / JCM 1027 / KCTC 2358 / NCIMB 9240 / NCTC 8049), this protein is Bifunctional purine biosynthesis protein PurH.